The primary structure comprises 1463 residues: MDPPSKKRSIFGGITSLFRSSTAPPEDRKGKSTNSNSVTANAPSLPPPQPESNGASSPFSPAKRASEAQLSVRKIIPKPQGPSSKLSQSVSASEIAHRPAPSTPAPAAATPVPKRRPGDNPHKLAASTSTPALQNLPNPPAPATSSKATSFSGAPSTPRPSIFRNSLYARPAPATTYTQRVSSHPLTQSFPPVTPGRPGRAANVDINNRILSNTASTELFPMKIPEPPRHLTGEMLAKEVPEDPNRAGSIYADEYLAHLCPPEFDDLQRRQFFCILDLRRLKYAADEVFLKKDWKINILNFAKEYEKSRSLIMLRYGLYEFKTVRASEAVKREWKLKHGIPDSDDESGAPAKTNGGGKRKAEEDLEPSSSTFTHTASPNKRARATEAPATNKRKANDELEEESQPSKLQKPGSPSPAKTPSATKSVFESIANKTASPQTAPKSSLFSSSTAAKPNGSIFDNAQKTPATSSNIFGHLSDASKDEDNESDTGSEAEAEDETPAKKKKKTTVNGASSSAPSEGGESTQSRSIFDRITRDANGQPVRQLPEGGLFSGESRKRSLSPVKELPANNTWNASAGIKFATPGTSSIFGSSNPKPPATTDTIDFAASTTKKPEEAAAPAEAPKEATPTTNLFGAQTKATEEAPKPAATNIFGSTTNPTETSIPAGSLFSAKPATSTTNSLFGATTSAAGQKKDEESKPTEAAPAPAPATSTLFGAKPATTESPKTNLFQFGTPNKTETAPATQPQFGGLFGKPPSTETPTEKPATTSLFGTDASKPATTSSLFGSATTAADKPAATNLFGSTTTPADKPTTTNLFGSTSTQATSGSDEPTAKKFAFGGTTESKPTTSLFGSTTPAPATSTENKGGLFGATTTSATPATNTKPLFGSTPAPAQENKPLFGSSTTTAAPVFQFGSTPASTSTEQKPLFGATAATDSKPLFGSTSATSTEQKPLFGSSTTMTEQKPLFGSISTTATEQKPLFGSTSTTEAKPLFGAAPASTEQKSLFGITPSTTENNPASIFGNSSTSTEQKPLFGSAPASTEQKPLFGSTPSTTENKPAGLFGNTSTTSTSTPLFNFGSQNTTASQPSTTGSIFGSASASFTFTAGGSDGTIKNPFASDGSYSAPTSFNFGSGDSQSSSAPFTFGAGGGTPSFTFGASSDSSNASNNASSAPIFSFGASQPSSTPLFGQNNPPAASNIFASSLAPVGGTSTGTSKHVPSFLESENKASAYSSLDSPFTFGGASSLATTPAASTPEPSAANAAAAGEDQGASADADEQPQEQISLTDGGPGEEDESVVHEVRAKAVKLVTAADSSADSSNGSGEKPAEKKSNSPWKVMGVGPLRLLKHKQTGAVRMLLRAEPRGNIALNKLVLPQFTYKPDAATPKFIKFAAARDDGKGLETWMIQVKTPQLAQELAAALEEHKKANEKKDGEKNEESEKKDEKQEEKKNEEKKDEKEEKKDEKK.

3 disordered regions span residues 1–199 (MDPP…GRPG), 339–568 (GIPD…ELPA), and 609–1064 (TTKK…FGNT). Composition is skewed to polar residues over residues 32 to 42 (STNSNSVTANA), 81 to 92 (GPSSKLSQSVSA), 144 to 155 (TSSKATSFSGAP), 175 to 191 (TTYT…QSFP), 367 to 378 (PSSSTFTHTASP), and 416 to 472 (PAKT…SSNI). Residues 481-498 (KDEDNESDTGSEAEAEDE) are compositionally biased toward acidic residues. Composition is skewed to low complexity over residues 511–523 (GASS…GGES) and 616–630 (AAAP…TPTT). Composition is skewed to polar residues over residues 651 to 664 (IFGS…TSIP), 673 to 689 (PATS…TSAA), and 720 to 746 (TTES…TQPQ). An FXFG 1 repeat occupies 729 to 732 (FQFG). Residues 753 to 768 (KPPSTETPTEKPATTS) are compositionally biased toward low complexity. Positions 777 to 789 (PATTSSLFGSATT) are enriched in polar residues. Low complexity predominate over residues 803 to 813 (TTTPADKPTTT). Polar residues predominate over residues 814–828 (NLFGSTSTQATSGSD). Residues 835 to 838 (FAFG) form an FXFG 2 repeat. Residues 840–863 (TTESKPTTSLFGSTTPAPATSTEN) show a composition bias toward polar residues. The span at 870–881 (ATTTSATPATNT) shows a compositional bias: low complexity. Polar residues-rich tracts occupy residues 900-923 (GSST…STEQ), 940-961 (GSTS…TMTE), 968-987 (SIST…STTE), 998-1029 (STEQ…STEQ), and 1037-1055 (PAST…TTEN). Residues 910-913 (FQFG) form an FXFG 3 repeat. 4 FXFG repeats span residues 1074-1077 (FNFG), 1127-1130 (FNFG), 1141-1144 (FTFG), and 1152-1155 (FTFG). 2 disordered regions span residues 1155 to 1174 (GASS…PIFS) and 1179 to 1217 (QPSS…KHVP). Positions 1156–1170 (ASSDSSNASNNASSA) are enriched in low complexity. One copy of the FXFG 8 repeat lies at 1173-1176 (FSFG). The span at 1179–1199 (QPSSTPLFGQNNPPAASNIFA) shows a compositional bias: polar residues. The stretch at 1236–1239 (FTFG) is one FXFG 9 repeat. Low complexity predominate over residues 1240–1271 (GASSLATTPAASTPEPSAANAAAAGEDQGASA). Disordered regions lie at residues 1240–1335 (GASS…PWKV) and 1416–1463 (AALE…DEKK). Positions 1289 to 1427 (GEEDESVVHE…LEEHKKANEK (139 aa)) constitute a RanBD1 domain. The segment covering 1418-1463 (LEEHKKANEKKDGEKNEESEKKDEKQEEKKNEEKKDEKEEKKDEKK) has biased composition (basic and acidic residues).

As to quaternary structure, the nuclear pore complex (NPC) constitutes the exclusive means of nucleocytoplasmic transport. NPCs allow the passive diffusion of ions and small molecules and the active, nuclear transport receptor-mediated bidirectional transport of macromolecules such as proteins, RNAs, ribonucleoparticles (RNPs), and ribosomal subunits across the nuclear envelope. The 55-60 MDa NPC is composed of at least 28 different subunits: AMO1, ELYS, GLE1, GLE2, MLP1, NDC1, NIC96, NSP1, NUP133, NUP145, NUP152, NUP159, NUP170, NUP188, NUP192, NUP37, NUP49, NUP53, NUP56, NUP57, NUP82, NUP84, NUP85, POM152, POM33, POM34, SEC13 and SEH1. Due to its 8-fold rotational symmetry, all subunits are present with 8 copies or multiples thereof.

The protein localises to the nucleus. Its subcellular location is the nuclear pore complex. It is found in the nucleus membrane. Its function is as follows. Functions as a component of the nuclear pore complex (NPC). NPC components, collectively referred to as nucleoporins (NUPs), can play the role of both NPC structural components and of docking or interaction partners for transiently associated nuclear transport factors. Active directional transport is assured by both, a Phe-Gly (FG) repeat affinity gradient for these transport factors across the NPC and a transport cofactor concentration gradient across the nuclear envelope (GSP1 and GSP2 GTPases associated predominantly with GTP in the nucleus, with GDP in the cytoplasm). In Chaetomium thermophilum (strain DSM 1495 / CBS 144.50 / IMI 039719) (Thermochaetoides thermophila), this protein is Nucleoporin NUP152 (NUP152).